Consider the following 405-residue polypeptide: MNIGGGKFLLGRISNNPTSGIVGLANVGKSTFFQAITNSKLGNPANYPFATIDAECAKVNIPSVPLSNLLRIYQSAKCVPGTLTIYDIAGLTRGASQGHGLGNKFLNDIRHVEGIFQVVRGFLKEDITHIEGNVDPVRDLSVVQDELILKDLEFLENIRERLSKKMRMVSKNSKEHQEMKIETELLDALEEHLFNGKKIRHFKDHWNLDEVKILNKHNFLTSKPTLILLNVSPQDYVRNENKFVRNIIEWINEFSPGDKFLLFSAEFESQLMECKGIASEYFDKIKEDTNVSDQQLVSAIPQIILEMRKLLNLISFFTCGPQEVHQWNIREGTTAQEAAGVIHSDLRETFISADVIKYDDLKKMEPPLNESLLKSKGLIKRAGKQYIMQDNDIALFKAAGGKIKK.

The OBG-type G domain occupies 17 to 283 (PTSGIVGLAN…CKGIASEYFD (267 aa)). Residues 26–31 (NVGKST) and Val-231 contribute to the ATP site. Residues 312 to 398 (NLISFFTCGP…QDNDIALFKA (87 aa)) enclose the TGS domain.

The protein belongs to the TRAFAC class OBG-HflX-like GTPase superfamily. OBG GTPase family.

The protein localises to the mitochondrion. In terms of biological role, hydrolyzes ATP, and can also hydrolyze GTP with lower efficiency. Has lower affinity for GTP. This Saccharomyces cerevisiae (strain ATCC 204508 / S288c) (Baker's yeast) protein is Obg-like ATPase homolog (YLF2).